Here is a 77-residue protein sequence, read N- to C-terminus: Conotoxin PnMEKL-04 (77 aa).

The N-terminal stretch at Met1–Ala19 is a signal peptide. Positions Leu20–Arg45 are excised as a propeptide. 3 disulfide bridges follow: Cys51–Cys65, Cys58–Cys69, and Cys64–Cys73.

Belongs to the conotoxin O2 superfamily. As to expression, expressed by the venom duct.

The protein localises to the secreted. This is Conotoxin PnMEKL-04 from Conus pennaceus (Feathered cone).